The following is a 101-amino-acid chain: Small ubiquitin-related modifier 1 (101 aa).

Ser2 bears the N-acetylserine mark. Ser2 is subject to Phosphoserine. Lys7 is covalently cross-linked (Glycyl lysine isopeptide (Lys-Gly) (interchain with G-Cter in SUMO1); alternate). A Glycyl lysine isopeptide (Lys-Gly) (interchain with G-Cter in SUMO2); alternate cross-link involves residue Lys7. Ser9 carries the post-translational modification Phosphoserine. Residues Lys16, Lys17, and Lys23 each participate in a glycyl lysine isopeptide (Lys-Gly) (interchain with G-Cter in SUMO2) cross-link. In terms of domain architecture, Ubiquitin-like spans 20–97; the sequence is EYIKLKVIGQ…IEVYQEQTGG (78 aa). Residue Lys25 forms a Glycyl lysine isopeptide (Lys-Gly) (interchain with G-Cter in SUMO1) linkage. Ser32 bears the Phosphoserine mark. Residues Lys37, Lys39, Lys45, and Lys46 each participate in a glycyl lysine isopeptide (Lys-Gly) (interchain with G-Cter in SUMO2) cross-link. Residue Gly97 forms a Glycyl lysine isopeptide (Gly-Lys) (interchain with K-? in acceptor proteins) linkage. A propeptide spanning residues 98 to 101 is cleaved from the precursor; it reads HSNV.

Belongs to the ubiquitin family. SUMO subfamily. As to quaternary structure, covalently attached to KCNB1; UBE2I increases cross-linking with KCNB1 and PIAS1 decreases cross-links with KCNB1. Interacts with SAE2, RANBP2, PIAS1 and PIAS2. Interacts with PRKN. Covalently attached to a number of proteins such as IKFZ1, PML, RANGAP1, HIPK2, SP100, p53, p73-alpha, MDM2, JUN, DNMT3B and TDG. Also interacts with HIF1A, HIPK2, HIPK3, CHD3, EXOSC9, RAD51 and RAD52. Interacts with USP25 (via ts SIM domain); the interaction weakly sumoylates USP25. Interacts with SIMC1, CASP8AP2, RNF111 and SOBP (via SIM domains). Interacts with BHLHE40/DEC1. Interacts with RWDD3. Interacts with UBE2I/UBC9 and this interaction is enhanced in the presence of RWDD3. Interacts with MTA1. Interacts with SENP2. Interacts with HINT1. Cleavage of precursor form by SENP1 or SENP2 is necessary for function. In terms of processing, polymeric SUMO1 chains undergo polyubiquitination by RNF4.

It is found in the nucleus membrane. The protein resides in the nucleus speckle. It localises to the cytoplasm. Its subcellular location is the nucleus. The protein localises to the PML body. It is found in the cell membrane. Functionally, ubiquitin-like protein that can be covalently attached to proteins as a monomer or a lysine-linked polymer. Covalent attachment via an isopeptide bond to its substrates requires prior activation by the E1 complex SAE1-SAE2 and linkage to the E2 enzyme UBE2I, and can be promoted by E3 ligases such as PIAS1-4, RANBP2 or CBX4. This post-translational modification on lysine residues of proteins plays a crucial role in a number of cellular processes such as nuclear transport, DNA replication and repair, mitosis and signal transduction. Involved for instance in targeting RANGAP1 to the nuclear pore complex protein RANBP2. Covalently attached to the voltage-gated potassium channel KCNB1; this modulates the gating characteristics of KCNB1. Polymeric SUMO1 chains are also susceptible to polyubiquitination which functions as a signal for proteasomal degradation of modified proteins. May be involved in modified proteins. May also regulate a network of genes involved in palate development. Covalently attached to ZFHX3. This is Small ubiquitin-related modifier 1 (SUMO1) from Ictidomys tridecemlineatus (Thirteen-lined ground squirrel).